The chain runs to 346 residues: Nicotinate-nucleotide--dimethylbenzimidazole phosphoribosyltransferase (346 aa).

The Proton acceptor role is filled by Glu312.

The protein belongs to the CobT family.

It catalyses the reaction 5,6-dimethylbenzimidazole + nicotinate beta-D-ribonucleotide = alpha-ribazole 5'-phosphate + nicotinate + H(+). It participates in nucleoside biosynthesis; alpha-ribazole biosynthesis; alpha-ribazole from 5,6-dimethylbenzimidazole: step 1/2. Catalyzes the synthesis of alpha-ribazole-5'-phosphate from nicotinate mononucleotide (NAMN) and 5,6-dimethylbenzimidazole (DMB). This is Nicotinate-nucleotide--dimethylbenzimidazole phosphoribosyltransferase from Cupriavidus necator (strain ATCC 17699 / DSM 428 / KCTC 22496 / NCIMB 10442 / H16 / Stanier 337) (Ralstonia eutropha).